Here is a 381-residue protein sequence, read N- to C-terminus: tRNA pseudouridine synthase Pus10 (381 aa).

The Nucleophile role is filled by D226.

Belongs to the pseudouridine synthase Pus10 family.

It catalyses the reaction uridine(54) in tRNA = pseudouridine(54) in tRNA. The enzyme catalyses uridine(55) in tRNA = pseudouridine(55) in tRNA. Responsible for synthesis of pseudouridine from uracil-54 and uracil-55 in the psi GC loop of transfer RNAs. The polypeptide is tRNA pseudouridine synthase Pus10 (Nitrosopumilus maritimus (strain SCM1)).